Here is a 615-residue protein sequence, read N- to C-terminus: Alpha-terpinene synthase TPS33PK, chloroplastic (615 aa).

A chloroplast-targeting transit peptide spans 1–33 (MFCRLGVHQFSPLSLILNTTKLARASTLSSACY). (2E)-geranyl diphosphate-binding residues include Glu-334, Val-371, Leu-375, Leu-513, and Ser-516. Positions 371 and 375 each coordinate Mg(2+). Residues 371-375 (VYGTL) carry the DDXXD motif motif. Residues Ser-516, Met-520, and Asp-524 each coordinate Mg(2+).

The protein belongs to the terpene synthase family. Tpsb subfamily. Mg(2+) serves as cofactor. Mn(2+) is required as a cofactor.

The protein localises to the plastid. Its subcellular location is the chloroplast. It carries out the reaction (2E)-geranyl diphosphate = alpha-terpinene + diphosphate. It catalyses the reaction (2E)-geranyl diphosphate = gamma-terpinene + diphosphate. It functions in the pathway secondary metabolite biosynthesis; terpenoid biosynthesis. Functionally, involved in monoterpene (C10) olefins biosynthesis, constituants of cannabinoids and terpenoids-rich resins. Catalyzes mainly the conversion of (2E)-geranyl diphosphate to alpha-terpinene and gamma-terpinene. The sequence is that of Alpha-terpinene synthase TPS33PK, chloroplastic from Cannabis sativa (Hemp).